The sequence spans 576 residues: MKASKYILPTEKENPSDAVVASHRLMIRAGLARKSSAGLYFYLPLGLKILQKIKQIIREEMNKTGALEFDLPILTPSDFWEQSGRWTAMGKEMFRIKDRHDLSYALGPTHEESFSFLLKPLLKSYKDLPLNVYQIQTKFRDEIRPRFGVIRSREFIMKDAYSFHIDDVSLDETYQSMRAAYRKIFDRCGLKTIPVQADSGSMGGSASEEFMVVSPIGEETLLLCNSCGYSSNSEKTPLVLKKENVSSASVEKKEISTPGKKTIVEVSAFLGIPESTTIKAATLKSEKKKILVYLRGDLELNLHKLHSLLRIVDSEPMTDAEIRELGLVPGFIAPVAPNDKVKVLYDRSLQKDFPYVVASNKEDFHTQGFVLEKEVSGLPEFADVALAREGDLCPNCNAPLKAEKGIEVGHIFKLGEKYTKAFGIQVLDQNGKARTLTMGCYGIGVNRTMATVIEQRNDEKGIFWPISIAPFEVTLVSITKGEEQYSKAEEFYNVLKNENLEVFWDDRDVGPGFKLKDSELIGFPIRVTIGKKFFENGEISIYNRKADKEESFVFAGFENLIARVESLRQELFAELE.

It belongs to the class-II aminoacyl-tRNA synthetase family. ProS type 1 subfamily. In terms of assembly, homodimer.

It is found in the cytoplasm. The catalysed reaction is tRNA(Pro) + L-proline + ATP = L-prolyl-tRNA(Pro) + AMP + diphosphate. Functionally, catalyzes the attachment of proline to tRNA(Pro) in a two-step reaction: proline is first activated by ATP to form Pro-AMP and then transferred to the acceptor end of tRNA(Pro). As ProRS can inadvertently accommodate and process non-cognate amino acids such as alanine and cysteine, to avoid such errors it has two additional distinct editing activities against alanine. One activity is designated as 'pretransfer' editing and involves the tRNA(Pro)-independent hydrolysis of activated Ala-AMP. The other activity is designated 'posttransfer' editing and involves deacylation of mischarged Ala-tRNA(Pro). The misacylated Cys-tRNA(Pro) is not edited by ProRS. This is Proline--tRNA ligase from Leptospira borgpetersenii serovar Hardjo-bovis (strain L550).